A 71-amino-acid chain; its full sequence is MPSVKLKENEPFDVALRRFKRSCEKAGVLAEVRRREFYEKPTSVRKRKAAAAVKRHAKKVQRENRKFQRLY.

Positions 48 to 59 are enriched in basic residues; it reads KAAAAVKRHAKK. Positions 48–71 are disordered; that stretch reads KAAAAVKRHAKKVQRENRKFQRLY. Residues 60–71 are compositionally biased toward basic and acidic residues; the sequence is VQRENRKFQRLY.

This sequence belongs to the bacterial ribosomal protein bS21 family.

The polypeptide is Small ribosomal subunit protein bS21 (Saccharophagus degradans (strain 2-40 / ATCC 43961 / DSM 17024)).